Reading from the N-terminus, the 95-residue chain is Co-chaperonin GroES (95 aa).

Belongs to the GroES chaperonin family. In terms of assembly, heptamer of 7 subunits arranged in a ring. Interacts with the chaperonin GroEL.

It is found in the cytoplasm. In terms of biological role, together with the chaperonin GroEL, plays an essential role in assisting protein folding. The GroEL-GroES system forms a nano-cage that allows encapsulation of the non-native substrate proteins and provides a physical environment optimized to promote and accelerate protein folding. GroES binds to the apical surface of the GroEL ring, thereby capping the opening of the GroEL channel. The sequence is that of Co-chaperonin GroES from Staphylococcus saprophyticus subsp. saprophyticus (strain ATCC 15305 / DSM 20229 / NCIMB 8711 / NCTC 7292 / S-41).